The sequence spans 118 residues: Large ribosomal subunit protein bL20 (118 aa).

This sequence belongs to the bacterial ribosomal protein bL20 family.

Binds directly to 23S ribosomal RNA and is necessary for the in vitro assembly process of the 50S ribosomal subunit. It is not involved in the protein synthesizing functions of that subunit. The protein is Large ribosomal subunit protein bL20 of Proteus mirabilis (strain HI4320).